Here is a 230-residue protein sequence, read N- to C-terminus: Thymidylate kinase (230 aa).

Residue 23–30 coordinates ATP; sequence GIDGAGKT.

Belongs to the thymidylate kinase family.

The catalysed reaction is dTMP + ATP = dTDP + ADP. Functionally, phosphorylation of dTMP to form dTDP in both de novo and salvage pathways of dTTP synthesis. The protein is Thymidylate kinase of Ureaplasma parvum serovar 3 (strain ATCC 27815 / 27 / NCTC 11736).